The primary structure comprises 572 residues: Vacuolar protein sorting-associated protein vps901 (572 aa).

Basic and acidic residues-rich tracts occupy residues 1-31 and 39-53; these read MDYP…EKPL and DEQR…KNHD. The tract at residues 1–108 is disordered; the sequence is MDYPSFHEDP…HENNPGQQEI (108 aa). A compositionally biased stretch (polar residues) spans 69-80; sequence QYEQTDSSSDQE. Basic and acidic residues predominate over residues 82–98; that stretch reads MNEKQSLDKENRNDNIP. Residues 219 to 357 form the VPS9 domain; sequence VEEDRVLSEK…IETLDCSSLT (139 aa). The interval 430–502 is disordered; the sequence is QIDTPESKEY…IVHEEQPVDD (73 aa). Residues 445–457 are compositionally biased toward polar residues; the sequence is PRGSSHSGSFTTD. The region spanning 529–571 is the CUE domain; the sequence is REKAEAITALRAMFPAFDSEVIEVVLNAQQGRLSSSIDSLLEM.

Its function is as follows. Required for vacuolar protein sorting; may be required for the consumption of transport vesicles containing vacuolar protein precursors. Required for vacuolar fusion. The chain is Vacuolar protein sorting-associated protein vps901 (vps901) from Schizosaccharomyces pombe (strain 972 / ATCC 24843) (Fission yeast).